Reading from the N-terminus, the 141-residue chain is Hemoglobin subunit alpha-A (141 aa).

Positions 1-141 constitute a Globin domain; that stretch reads VLSAADKNNV…VGTVLTAKYR (141 aa). H58 provides a ligand contact to O2. Heme b is bound at residue H87.

Belongs to the globin family. In terms of assembly, heterotetramer of two alpha chains and two beta chains. Red blood cells.

Functionally, involved in oxygen transport from the lung to the various peripheral tissues. The chain is Hemoglobin subunit alpha-A (HBAA) from Phasianus colchicus colchicus (Black-necked pheasant).